The sequence spans 883 residues: Alanine--tRNA ligase (883 aa).

Residues His562, His566, Cys675, and His679 each coordinate Zn(2+).

Belongs to the class-II aminoacyl-tRNA synthetase family. Zn(2+) is required as a cofactor.

It localises to the cytoplasm. The enzyme catalyses tRNA(Ala) + L-alanine + ATP = L-alanyl-tRNA(Ala) + AMP + diphosphate. Its function is as follows. Catalyzes the attachment of alanine to tRNA(Ala) in a two-step reaction: alanine is first activated by ATP to form Ala-AMP and then transferred to the acceptor end of tRNA(Ala). Also edits incorrectly charged Ser-tRNA(Ala) and Gly-tRNA(Ala) via its editing domain. This Ruegeria sp. (strain TM1040) (Silicibacter sp.) protein is Alanine--tRNA ligase.